Consider the following 534-residue polypeptide: Serine/threonine-protein kinase ppk15 (534 aa).

The disordered stretch occupies residues 1 to 40; that stretch reads MDSDSPILPLSNNPPAARTHDHSQRNNHARHVSSSGTTLF. Phosphoserine is present on residues Ser-33, Ser-56, and Ser-60. The disordered stretch occupies residues 85–104; the sequence is FSSEQNPRRPLTKPSEGVHN. In terms of domain architecture, Protein kinase spans 130–458; the sequence is YLILDTLGHG…PDQAKNHPFI (329 aa). ATP-binding positions include 136 to 144 and Lys-159; that span reads LGHGTFGQV. Asp-257 acts as the Proton acceptor in catalysis. Residue Tyr-291 is modified to Phosphotyrosine.

The protein belongs to the protein kinase superfamily. Ser/Thr protein kinase family.

The protein resides in the cytoplasm. Its subcellular location is the cytoskeleton. It is found in the microtubule organizing center. It localises to the spindle pole body. It carries out the reaction L-seryl-[protein] + ATP = O-phospho-L-seryl-[protein] + ADP + H(+). The enzyme catalyses L-threonyl-[protein] + ATP = O-phospho-L-threonyl-[protein] + ADP + H(+). The sequence is that of Serine/threonine-protein kinase ppk15 (ppk15) from Schizosaccharomyces pombe (strain 972 / ATCC 24843) (Fission yeast).